A 65-amino-acid polypeptide reads, in one-letter code: Transcriptional regulatory protein SenS (65 aa).

A DNA-binding region (H-T-H motif) is located at residues 11–31 (RFRKRKTYGNQILPLELLIEK).

To B.natto SenN.

In terms of biological role, regulates the expression of extracellular-protein genes of Bacillus subtilis. The sequence is that of Transcriptional regulatory protein SenS (senS) from Bacillus subtilis (strain 168).